Reading from the N-terminus, the 565-residue chain is UvrABC system protein C (565 aa).

One can recognise a GIY-YIG domain in the interval 12 to 89; the sequence is EEPGVYIFKN…IRTHKPKYNV (78 aa). In terms of domain architecture, UVR spans 195–230; that stretch reads KDVLPTLYEKIEQYASNLAFEKAAFLRDQVLVLQNI.

Belongs to the UvrC family. Interacts with UvrB in an incision complex.

Its subcellular location is the cytoplasm. Its function is as follows. The UvrABC repair system catalyzes the recognition and processing of DNA lesions. UvrC both incises the 5' and 3' sides of the lesion. The N-terminal half is responsible for the 3' incision and the C-terminal half is responsible for the 5' incision. The polypeptide is UvrABC system protein C (Hydrogenobaculum sp. (strain Y04AAS1)).